The chain runs to 126 residues: NADPH-dependent 7-cyano-7-deazaguanine reductase (126 aa).

The active-site Thioimide intermediate is cysteine 40. Aspartate 47 (proton donor) is an active-site residue. Substrate is bound by residues 62 to 64 (IEL) and 81 to 82 (HE).

This sequence belongs to the GTP cyclohydrolase I family. QueF type 1 subfamily.

It is found in the cytoplasm. The catalysed reaction is 7-aminomethyl-7-carbaguanine + 2 NADP(+) = 7-cyano-7-deazaguanine + 2 NADPH + 3 H(+). The protein operates within tRNA modification; tRNA-queuosine biosynthesis. Its function is as follows. Catalyzes the NADPH-dependent reduction of 7-cyano-7-deazaguanine (preQ0) to 7-aminomethyl-7-deazaguanine (preQ1). This is NADPH-dependent 7-cyano-7-deazaguanine reductase from Campylobacter jejuni subsp. doylei (strain ATCC BAA-1458 / RM4099 / 269.97).